The chain runs to 827 residues: MSLTRRDFIKANAVAATAAAAGIATPAIAQPAKANIRWDKGVCRFCGTGCAVLVGVQDGRVVATQGDPDSPVNRGLNCIKGYFLSKIMYGEDRLTKPLLRMKNGKFDKNGEFQPISWDQAFDIMAEKWKEQLKKPDGVTRVGMFGSGQWTIWEGYAASKLFKAGFRSNNLDPNARHCMASAVAGFMRTFGIDEPMGCYDDIEQTDAFVLWGSNMAEMHPILWSRVTDRRLTHEGCKVAVLSTFEHRSFELADIPMVFTPQTDLAILNYICHYIISKNAYDKDFIEKHVNFKKGATDIGYGLRPTHALEKDQANAATPDKSDPMTFDEFKAFVAEYTLEKVAKLSGVPADKLEALAKLYADPKVKVVSFWTMGFNQHARGTWVNNMIYNVHLLMGKISEPGNSPFSLTGQPSACGTAREVGTFAHRLPADMVVMNDKHREITEGLWKLPPGTLNPKIGYHAVLQHRMLKDGKLNAYWVMCTNNMQTAPNMNEEGYPGYRNPANFIVVSDPYPTVTALAADLILPTAMWMEKEGAYGNAERRTQFWRQQVKAPGEAKSDLWQIMEFSKRFKIEEVWPEELLAKKPELRGKTLFDVLYKNGQVDKFPATDIQAGFENDEAKAFGFYPQKGLFEEYASFGRGHAHDLAPFEAYHKARGLRWPVVDGKETLWRFREGYDPYVKAGEGVKFYGKPDGKAWIFALPYQPAAESPDKEFDLWLSTGRVLEHWHSGSMTRRVPELHKSVPNAVLYMHPNDAAKRNLRNGDVVKVASRRGEVTTRIDTRGRNKPPEGLVFMPFFDESQLVNKLTLDATCPISKETDYKKCAVKVSKA.

Residues 1–34 (MSLTRRDFIKANAVAATAAAAGIATPAIAQPAKA) constitute a signal peptide (tat-type signal). The 4Fe-4S Mo/W bis-MGD-type domain occupies 36–92 (IRWDKGVCRFCGTGCAVLVGVQDGRVVATQGDPDSPVNRGLNCIKGYFLSKIMYGED). 4 residues coordinate [4Fe-4S] cluster: Cys-43, Cys-46, Cys-50, and Cys-78. Residues Lys-80, Gln-148, Asn-173, Cys-177, 210–217 (WGSNMAEM), 241–245 (STFEH), 260–262 (QTD), Met-371, Gln-375, Asn-481, 507–508 (SD), Lys-530, Asp-557, and 717–726 (TGRVLEHWHS) each bind Mo-bis(molybdopterin guanine dinucleotide). Residue Phe-793 participates in substrate binding. Positions 801 and 818 each coordinate Mo-bis(molybdopterin guanine dinucleotide).

The protein belongs to the prokaryotic molybdopterin-containing oxidoreductase family. NasA/NapA/NarB subfamily. In terms of assembly, component of the periplasmic nitrate reductase NapAB complex composed of NapA and NapB. [4Fe-4S] cluster is required as a cofactor. Mo-bis(molybdopterin guanine dinucleotide) serves as cofactor. Predicted to be exported by the Tat system. The position of the signal peptide cleavage has not been experimentally proven.

The protein resides in the periplasm. It carries out the reaction 2 Fe(II)-[cytochrome] + nitrate + 2 H(+) = 2 Fe(III)-[cytochrome] + nitrite + H2O. Its function is as follows. Catalytic subunit of the periplasmic nitrate reductase complex NapAB. Receives electrons from NapB and catalyzes the reduction of nitrate to nitrite. The chain is Periplasmic nitrate reductase from Paramagnetospirillum magneticum (strain ATCC 700264 / AMB-1) (Magnetospirillum magneticum).